Here is a 238-residue protein sequence, read N- to C-terminus: MSGFDVTKTFNRFTQRAGELVNKNEKTSYPTRTSDLIHEIDQMKAWISKIITATEEFVDINIASKVADAFQKNKEKITTTDKLGTALEQVASQSEKAAPQLSKMLTEASDVHQRMATARKNFNSEVNTTFIEDLKNFLNTTLSEAQKAKTKLEEVRLDLDSDKTKLKNAKTAEQKAKWEAEVRKDESDFDRVHQESLTIFEKTCKEFDGLSVQLLDLIRAEKNYYEACAKECSMMLGE.

A BAR domain is found at 18–238; sequence GELVNKNEKT…AKECSMMLGE (221 aa).

This is Hydatid disease diagnostic antigen P-29 from Echinococcus granulosus (Hydatid tapeworm).